Consider the following 243-residue polypeptide: Probable sentrin-specific protease 8 (243 aa).

A protease region spans residues 12 to 185 (SAIYQSDINI…LYVLSIIEEL (174 aa)). Residues His-109 and Asp-126 contribute to the active site. Catalysis depends on Cys-174, which acts as the Nucleophile.

Belongs to the peptidase C48 family.

In terms of biological role, protease that catalyzes two essential functions in the nedd8 pathway: processing of full-length nedd8 to its mature form and deconjugation of nedd8 from targeted proteins. The sequence is that of Probable sentrin-specific protease 8 (senp8) from Dictyostelium discoideum (Social amoeba).